Consider the following 414-residue polypeptide: Secernin-1 (414 aa).

An N-acetylalanine modification is found at alanine 2. Cysteine 9 is an active-site residue.

It belongs to the peptidase C69 family. Secernin subfamily.

The protein resides in the cytoplasm. Its function is as follows. Regulates exocytosis in mast cells. Increases both the extent of secretion and the sensitivity of mast cells to stimulation with calcium. The polypeptide is Secernin-1 (SCRN1) (Bos taurus (Bovine)).